A 254-amino-acid polypeptide reads, in one-letter code: Triosephosphate isomerase (254 aa).

Substrate is bound at residue 10–12 (NWK). The active-site Electrophile is the His99. The Proton acceptor role is filled by Glu169. Substrate is bound by residues Gly175, Ser215, and 236 to 237 (GG).

This sequence belongs to the triosephosphate isomerase family. Homodimer.

It localises to the cytoplasm. It catalyses the reaction D-glyceraldehyde 3-phosphate = dihydroxyacetone phosphate. Its pathway is carbohydrate biosynthesis; gluconeogenesis. It participates in carbohydrate degradation; glycolysis; D-glyceraldehyde 3-phosphate from glycerone phosphate: step 1/1. Involved in the gluconeogenesis. Catalyzes stereospecifically the conversion of dihydroxyacetone phosphate (DHAP) to D-glyceraldehyde-3-phosphate (G3P). The chain is Triosephosphate isomerase from Chlamydia abortus (strain DSM 27085 / S26/3) (Chlamydophila abortus).